Reading from the N-terminus, the 215-residue chain is Variable small protein 6 (215 aa).

The signal sequence occupies residues 1-18 (MRKRISAIIMTLFMVFMS). Cysteine 19 carries the N-palmitoyl cysteine lipid modification. A lipid anchor (S-diacylglycerol cysteine) is attached at cysteine 19.

Belongs to the variable small protein (Vsp) family.

It localises to the cell outer membrane. Its function is as follows. The Vlp and Vsp proteins are antigenically distinct proteins, only one vlp or vsp gene is transcriptionally active at any one time. Switching between these genes is a mechanism of host immune response evasion. In Borrelia hermsii, this protein is Variable small protein 6.